The following is a 248-amino-acid chain: Triosephosphate isomerase (248 aa).

Residue 9-11 (NWK) participates in substrate binding. His94 (electrophile) is an active-site residue. Glu166 serves as the catalytic Proton acceptor. Substrate is bound by residues Gly172, Ser211, and 232–233 (GG).

Belongs to the triosephosphate isomerase family. In terms of assembly, homodimer.

The protein resides in the cytoplasm. The catalysed reaction is D-glyceraldehyde 3-phosphate = dihydroxyacetone phosphate. It functions in the pathway carbohydrate biosynthesis; gluconeogenesis. It participates in carbohydrate degradation; glycolysis; D-glyceraldehyde 3-phosphate from glycerone phosphate: step 1/1. Functionally, involved in the gluconeogenesis. Catalyzes stereospecifically the conversion of dihydroxyacetone phosphate (DHAP) to D-glyceraldehyde-3-phosphate (G3P). The chain is Triosephosphate isomerase from Herminiimonas arsenicoxydans.